The chain runs to 228 residues: Glycosylphosphatidylinositol-anchored high density lipoprotein-binding protein 1 (228 aa).

Residues 1–22 (MKALRAVLLILLLSGQPGSGWA) form the signal peptide. The interval 21-32 (WAQEDGDADPEP) is disordered. The important for LPL transport to the lumenal surface of endothelial cells stretch occupies residues 24–48 (EDGDADPEPENYNYDDDDDEEEEEE). Over residues 24 to 49 (EDGDADPEPENYNYDDDDDEEEEEET) the composition is skewed to acidic residues. Tyr-35 bears the Sulfotyrosine mark. The UPAR/Ly6 domain maps to 61 to 148 (LQCYFCQVLH…PWQNPQVQNP (88 aa)). Cystine bridges form between Cys-63–Cys-88, Cys-66–Cys-75, Cys-81–Cys-109, Cys-113–Cys-129, and Cys-130–Cys-135. Asn-76 carries an N-linked (GlcNAc...) asparagine glycan. Positions 102-108 (LTTYSMW) are important for interaction with LPL. Residues 145-200 (VQNPLGGRADSPLESGTRHPQGGKFSHPQVVKAAHPQSDGANLPKSGKANQPQGSG) are disordered. Gly-198 carries the GPI-anchor amidated glycine lipid modification. Positions 199–228 (SGAGYPSGWTKFGNIALLLSFFTCLWASGA) are cleaved as a propeptide — removed in mature form.

As to quaternary structure, mostly monomer, but also homodimer and homooligomer. Interacts with lipoprotein lipase (LPL). Interacts with high affinity with high-density lipoprotein (HDL). Interacts with chylomicrons. Interacts with APOA5. Post-translationally, glycosylation of Asn-76 is critical for cell surface localization. Sulfation of a Tyr in the N-terminal acidic region increases the affinity for LPL. In terms of tissue distribution, detected in fat tissue. Detected on the luminal surface of capillary endothelial cells in heart, skeletal muscle and brown adipose tissue (at protein level). Detected in heart and brown adipose tissue. Expressed at lower levels in lung and liver.

The protein localises to the apical cell membrane. It localises to the basolateral cell membrane. It is found in the cell membrane. In terms of biological role, mediates the transport of lipoprotein lipase LPL from the basolateral to the apical surface of endothelial cells in capillaries. Anchors LPL on the surface of endothelial cells in the lumen of blood capillaries. Thereby, plays an important role in lipolytic processing of chylomicrons by LPL, triglyceride metabolism and lipid homeostasis. Binds chylomicrons and phospholipid particles that contain APOA5. Binds high-density lipoprotein (HDL) and plays a role in the uptake of lipids from HDL. This is Glycosylphosphatidylinositol-anchored high density lipoprotein-binding protein 1 from Mus musculus (Mouse).